The primary structure comprises 88 residues: U1-hexatoxin-Iw1d (88 aa).

An N-terminal signal peptide occupies residues 1–17 (LKFVVLICLVIMASTSA). Pyrrolidone carboxylic acid is present on Gln-18. Intrachain disulfides connect Cys-20-Cys-31, Cys-25-Cys-39, Cys-30-Cys-65, Cys-49-Cys-73, and Cys-67-Cys-80. Positions 86 to 88 (RSE) are excised as a propeptide.

The protein belongs to the MIT-like AcTx family. As to expression, expressed by the venom gland.

It is found in the secreted. The sequence is that of U1-hexatoxin-Iw1d from Illawarra wisharti (Illawarra funnel-web spider).